A 1131-amino-acid chain; its full sequence is Probable pre-mRNA-splicing factor ATP-dependent RNA helicase mog-1 (1131 aa).

Basic and acidic residues-rich tracts occupy residues 1 to 12, 65 to 122, 139 to 148, 160 to 173, 180 to 225, and 407 to 416; these read MSDKRADGRLEG, RGVT…DRSG, WDQDDREGSS, RGERDRKRYMDSER, RSER…WEEE, and GNYKESHQFA. Disordered stretches follow at residues 1 to 225 and 389 to 416; these read MSDK…WEEE and MGVKEKKDETADPEDDDSGNYKESHQFA. A Helicase ATP-binding domain is found at 451-614; that stretch reads MNVIRENNVV…FGGNCPTFTI (164 aa). 464–471 contributes to the ATP binding site; that stretch reads GETGSGKT. Residues 561 to 564 carry the DEAH box motif; sequence DEAH. A Helicase C-terminal domain is found at 629–812; that stretch reads PVEDYVDAAV…NVVLLLKSLG (184 aa). Basic and acidic residues-rich tracts occupy residues 1085 to 1114 and 1121 to 1131; these read EMREAQKEMERRKEESDKAFKRPESSRRVV and ARSERRKLWGL. The interval 1085-1131 is disordered; sequence EMREAQKEMERRKEESDKAFKRPESSRRVVEVGSKSARSERRKLWGL.

The protein belongs to the DEAD box helicase family. DEAH subfamily. PRP16 sub-subfamily.

Its subcellular location is the nucleus. The catalysed reaction is ATP + H2O = ADP + phosphate + H(+). In terms of biological role, probable ATP-binding RNA helicase involved in pre-mRNA splicing. The protein is Probable pre-mRNA-splicing factor ATP-dependent RNA helicase mog-1 (mog-1) of Caenorhabditis elegans.